The primary structure comprises 70 residues: Large ribosomal subunit protein bL31 (70 aa).

Zn(2+)-binding residues include C16, C18, C37, and C40.

The protein belongs to the bacterial ribosomal protein bL31 family. Type A subfamily. In terms of assembly, part of the 50S ribosomal subunit. Zn(2+) serves as cofactor.

Binds the 23S rRNA. The polypeptide is Large ribosomal subunit protein bL31 (Haemophilus influenzae (strain PittEE)).